The chain runs to 562 residues: NAD-dependent malic enzyme (562 aa).

Catalysis depends on Y101, which acts as the Proton donor. R154 contacts NAD(+). K172 (proton acceptor) is an active-site residue. Residues E243, D244, and D267 each coordinate a divalent metal cation. 2 residues coordinate NAD(+): D267 and N415.

It belongs to the malic enzymes family. Homotetramer. Mg(2+) is required as a cofactor. Mn(2+) serves as cofactor.

It carries out the reaction (S)-malate + NAD(+) = pyruvate + CO2 + NADH. It catalyses the reaction oxaloacetate + H(+) = pyruvate + CO2. In Shewanella baltica (strain OS155 / ATCC BAA-1091), this protein is NAD-dependent malic enzyme.